The primary structure comprises 100 residues: Urease subunit gamma (100 aa).

It belongs to the urease gamma subunit family. Heterotrimer of UreA (gamma), UreB (beta) and UreC (alpha) subunits. Three heterotrimers associate to form the active enzyme.

It is found in the cytoplasm. It carries out the reaction urea + 2 H2O + H(+) = hydrogencarbonate + 2 NH4(+). The protein operates within nitrogen metabolism; urea degradation; CO(2) and NH(3) from urea (urease route): step 1/1. The polypeptide is Urease subunit gamma (Prochlorococcus marinus (strain NATL1A)).